The following is a 72-amino-acid chain: Translation initiation factor IF-1 (72 aa).

Positions 1–72 (MAKEEVLEFP…TKGRITYRLK (72 aa)) constitute an S1-like domain.

This sequence belongs to the IF-1 family. In terms of assembly, component of the 30S ribosomal translation pre-initiation complex which assembles on the 30S ribosome in the order IF-2 and IF-3, IF-1 and N-formylmethionyl-tRNA(fMet); mRNA recruitment can occur at any time during PIC assembly.

It localises to the cytoplasm. One of the essential components for the initiation of protein synthesis. Stabilizes the binding of IF-2 and IF-3 on the 30S subunit to which N-formylmethionyl-tRNA(fMet) subsequently binds. Helps modulate mRNA selection, yielding the 30S pre-initiation complex (PIC). Upon addition of the 50S ribosomal subunit IF-1, IF-2 and IF-3 are released leaving the mature 70S translation initiation complex. This Brucella suis biovar 1 (strain 1330) protein is Translation initiation factor IF-1.